Here is an 843-residue protein sequence, read N- to C-terminus: Protein P (843 aa).

Residues 1–177 (MPLSYQHFRK…FCGSPYSWEQ (177 aa)) form a terminal protein domain (TP) region. A spacer region spans residues 178 to 346 (ELQHGRLVFQ…YCLTHIVNLL (169 aa)). The segment at 347–690 (EDWGPCTEHG…YLHLYPVARQ (344 aa)) is polymerase/reverse transcriptase domain (RT). A Reverse transcriptase domain is found at 357-600 (EHNIRIPRTP…YSLNFMGYVI (244 aa)). Positions 429, 551, and 552 each coordinate Mg(2+).

The protein belongs to the hepadnaviridae P protein family.

The catalysed reaction is DNA(n) + a 2'-deoxyribonucleoside 5'-triphosphate = DNA(n+1) + diphosphate. It catalyses the reaction Endonucleolytic cleavage to 5'-phosphomonoester.. Activated by host HSP70 and HSP40 in vitro to be able to bind the epsilon loop of the pgRNA. Because deletion of the RNase H region renders the protein partly chaperone-independent, the chaperones may be needed indirectly to relieve occlusion of the RNA-binding site by this domain. Inhibited by several reverse-transcriptase inhibitors: Lamivudine, Adefovir and Entecavir. Multifunctional enzyme that converts the viral RNA genome into dsDNA in viral cytoplasmic capsids. This enzyme displays a DNA polymerase activity that can copy either DNA or RNA templates, and a ribonuclease H (RNase H) activity that cleaves the RNA strand of RNA-DNA heteroduplexes in a partially processive 3'- to 5'-endonucleasic mode. Neo-synthesized pregenomic RNA (pgRNA) are encapsidated together with the P protein, and reverse-transcribed inside the nucleocapsid. Initiation of reverse-transcription occurs first by binding the epsilon loop on the pgRNA genome, and is initiated by protein priming, thereby the 5'-end of (-)DNA is covalently linked to P protein. Partial (+)DNA is synthesized from the (-)DNA template and generates the relaxed circular DNA (RC-DNA) genome. After budding and infection, the RC-DNA migrates in the nucleus, and is converted into a plasmid-like covalently closed circular DNA (cccDNA). The activity of P protein does not seem to be necessary for cccDNA generation, and is presumably released from (+)DNA by host nuclear DNA repair machinery. This Hepatitis B virus genotype C subtype adr (isolate Japan/Nishioka/1983) (HBV-C) protein is Protein P.